The sequence spans 177 residues: Crossover junction endodeoxyribonuclease RuvC (177 aa).

Residues D8, E72, and D144 contribute to the active site. The Mg(2+) site is built by D8, E72, and D144.

Belongs to the RuvC family. As to quaternary structure, homodimer which binds Holliday junction (HJ) DNA. The HJ becomes 2-fold symmetrical on binding to RuvC with unstacked arms; it has a different conformation from HJ DNA in complex with RuvA. In the full resolvosome a probable DNA-RuvA(4)-RuvB(12)-RuvC(2) complex forms which resolves the HJ. Requires Mg(2+) as cofactor.

It is found in the cytoplasm. The enzyme catalyses Endonucleolytic cleavage at a junction such as a reciprocal single-stranded crossover between two homologous DNA duplexes (Holliday junction).. Functionally, the RuvA-RuvB-RuvC complex processes Holliday junction (HJ) DNA during genetic recombination and DNA repair. Endonuclease that resolves HJ intermediates. Cleaves cruciform DNA by making single-stranded nicks across the HJ at symmetrical positions within the homologous arms, yielding a 5'-phosphate and a 3'-hydroxyl group; requires a central core of homology in the junction. The consensus cleavage sequence is 5'-(A/T)TT(C/G)-3'. Cleavage occurs on the 3'-side of the TT dinucleotide at the point of strand exchange. HJ branch migration catalyzed by RuvA-RuvB allows RuvC to scan DNA until it finds its consensus sequence, where it cleaves and resolves the cruciform DNA. The polypeptide is Crossover junction endodeoxyribonuclease RuvC (Teredinibacter turnerae (strain ATCC 39867 / T7901)).